The sequence spans 252 residues: Triosephosphate isomerase (252 aa).

9-11 (NWK) is a binding site for substrate. His100 functions as the Electrophile in the catalytic mechanism. Glu171 serves as the catalytic Proton acceptor. Residues Gly177, Ser216, and 237 to 238 (GG) contribute to the substrate site.

The protein belongs to the triosephosphate isomerase family. In terms of assembly, homodimer.

It localises to the cytoplasm. It catalyses the reaction D-glyceraldehyde 3-phosphate = dihydroxyacetone phosphate. It participates in carbohydrate biosynthesis; gluconeogenesis. Its pathway is carbohydrate degradation; glycolysis; D-glyceraldehyde 3-phosphate from glycerone phosphate: step 1/1. Involved in the gluconeogenesis. Catalyzes stereospecifically the conversion of dihydroxyacetone phosphate (DHAP) to D-glyceraldehyde-3-phosphate (G3P). The sequence is that of Triosephosphate isomerase from Polynucleobacter necessarius subsp. necessarius (strain STIR1).